The primary structure comprises 424 residues: Protein CLP1 homolog 5 (424 aa).

ATP-binding positions include E16, T56, and 124 to 129 (DSGKST).

Belongs to the Clp1 family. Clp1 subfamily. In terms of assembly, forms a complex with cleavage and polyadenylation specificity factor (CPSF) subunits PCFS1, FIPS3 and CPSF30.

The protein resides in the nucleus. In terms of biological role, required for endonucleolytic cleavage during polyadenylation-dependent pre-mRNA 3'-end formation. In Arabidopsis thaliana (Mouse-ear cress), this protein is Protein CLP1 homolog 5.